The chain runs to 667 residues: MASSCSQALRHHACKSSKILRIHLQKSWTNRSFAAYQQPDVSSQEEIVIPKKKTWSKEAVLQALASTVKRDPTASDYRLQDDSFLTPKTASDFKLFCRSQESGRNAAKYFINKYPKYFEKDYAQPHIPCLMPETLDAQLEDVSEAALKERIQLRKVKAAVDLYDQLLQAGTSVSLDLTNDLLDLICLYGEADPVQETFEAEQRSEEMEDIQDETQTKKGRSPKASDLLKTSWKENNNAERIFGLLSEPNTRSYSALIRGMVKHAAYTQAFSTYTDLLNNRLKADVHIFNALLAAVPAVRPKYNEKWELILDLLKQMAEQKVKPNLLTLNAILKSLRRCGALGRSQAFPVISEMKVLSIEPSLASYNHLLAIFYRSGAQVQTPTDVLVEVMNEVSGKSFTPQDPDDAQFFTTAMRVCLDTKDMEQAYRVHELLGVGDNWRFMGSDFQQSIYYAWFFSLLCMMENIDVVMKWYRDLVPSVYYPSSNAMSDLLRALDTDSRLDLIPKIWKDMKQLGHGNRQQLVEEVLTLMAREKHCPEVQESFADCALDIMKMYDTNERGKVIMSWTASSLSDVTTILLAANRKQEAWEMLKLFRTHNRVPSAELLNQFVTCVKEAGQVSQAVELVQISAAFCLSETPKLIQRVQQEFELSEEHKNILSDLEIQTFNGD.

The transit peptide at 1-11 directs the protein to the mitochondrion; the sequence is MASSCSQALRH. The interval 199-226 is disordered; the sequence is EAEQRSEEMEDIQDETQTKKGRSPKASD. PPR repeat units follow at residues 249 to 283, 284 to 323, 324 to 360, 361 to 400, 482 to 516, and 565 to 599; these read NTRS…RLKA, DVHI…KVKP, NLLT…SIEP, SLAS…SFTP, SSNA…GHGN, and TASS…NRVP.

Belongs to the mitochondrion-specific ribosomal protein mS39 family.

The protein resides in the mitochondrion. Its function is as follows. Mitochondrial RNA-binding protein that may have a role in mitochondrial translation. This Danio rerio (Zebrafish) protein is Small ribosomal subunit protein mS39 (ptcd3).